A 723-amino-acid polypeptide reads, in one-letter code: Polyribonucleotide nucleotidyltransferase (723 aa).

Mg(2+) contacts are provided by D487 and D493. The region spanning 554 to 613 (PKILIMHINPDKIREVIGPSGKQINKIIDETGVKIDIEQDGTIFISSVDEAANQKAKQII) is the KH domain. The region spanning 623 to 691 (GQVYLGKVKR…KQGRVNLSRK (69 aa)) is the S1 motif domain. A disordered region spans residues 702 to 723 (GELPRESREKRGRRPERHRMKP). The segment covering 711-723 (KRGRRPERHRMKP) has biased composition (basic residues).

Belongs to the polyribonucleotide nucleotidyltransferase family. Requires Mg(2+) as cofactor.

It localises to the cytoplasm. It catalyses the reaction RNA(n+1) + phosphate = RNA(n) + a ribonucleoside 5'-diphosphate. Involved in mRNA degradation. Catalyzes the phosphorolysis of single-stranded polyribonucleotides processively in the 3'- to 5'-direction. This Geobacillus kaustophilus (strain HTA426) protein is Polyribonucleotide nucleotidyltransferase.